We begin with the raw amino-acid sequence, 1115 residues long: DNA-directed RNA polymerase subunit beta (1115 aa).

The segment at 1084–1115 (HEAGEGEDDEYFEEDEEAVDDEPMTFDDDDME) is disordered. A compositionally biased stretch (acidic residues) spans 1088-1115 (EGEDDEYFEEDEEAVDDEPMTFDDDDME).

This sequence belongs to the RNA polymerase beta chain family. The RNAP catalytic core consists of 2 alpha, 1 beta, 1 beta' and 1 omega subunit. When a sigma factor is associated with the core the holoenzyme is formed, which can initiate transcription.

It catalyses the reaction RNA(n) + a ribonucleoside 5'-triphosphate = RNA(n+1) + diphosphate. In terms of biological role, DNA-dependent RNA polymerase catalyzes the transcription of DNA into RNA using the four ribonucleoside triphosphates as substrates. This chain is DNA-directed RNA polymerase subunit beta, found in Desulfitobacterium hafniense (strain DSM 10664 / DCB-2).